Reading from the N-terminus, the 46-residue chain is uncharacterized protein (46 aa).

The segment at 1 to 46 is disordered; the sequence is MEVTPLETGRARSHQKASTAAQPHAADEKMTGSTARRYLSQDHQSV.

This is an uncharacterized protein from Treponema pallidum (strain Nichols).